A 526-amino-acid chain; its full sequence is Microphthalmia-associated transcription factor (526 aa).

The disordered stretch occupies residues 1–54 (MQSESGIVPDFEVGEEFHEEPKTYYELKSQPLKSSSSAEHPGASKPPISSSSMT). S5 carries the post-translational modification Phosphoserine; by MTOR. Basic and acidic residues predominate over residues 15 to 25 (EEFHEEPKTYY). Residues 41-54 (PGASKPPISSSSMT) are compositionally biased toward low complexity. A Phosphoserine; by MAPK modification is found at S180. The tract at residues 224–295 (DDVIDDIISL…PNIKRELTAC (72 aa)) is transactivation. S280 carries the phosphoserine; by MARK3 modification. K289 participates in a covalent cross-link: Glycyl lysine isopeptide (Lys-Gly) (interchain with G-Cter in SUMO). The 54-residue stretch at 311-364 (QKKDNHNLIERRRRFNINDRIKELGTLIPKSNDPDMRWNKGTILKASVDYIRKL) folds into the bHLH domain. Residues 355-402 (KASVDYIRKLQREQQRAKELENRQKKLEHANRHLLLRIQELEMQARAH) adopt a coiled-coil conformation. Residues 374–395 (LENRQKKLEHANRHLLLRIQEL) form a leucine-zipper region. The interval 401–431 (AHGLSLIPSTGLCSPDLVNRIIKQEPVLENC) is DNA-binding regulation. S405 is subject to Phosphoserine; by GSK3. S414 is modified (phosphoserine). K423 is covalently cross-linked (Glycyl lysine isopeptide (Lys-Gly) (interchain with G-Cter in SUMO)). S491 carries the phosphoserine modification. Residues 496–526 (TDPLLSSVSPGASKTSSRRSSMSMEETEHTC) form a disordered region. Residues 499–509 (LLSSVSPGASK) are compositionally biased toward polar residues. A Phosphoserine; by RPS6KA1 modification is found at S516.

The protein belongs to the MiT/TFE family. Homodimer or heterodimer; dimerization is mediated via the coiled coil region. Efficient DNA binding requires dimerization with another bHLH protein. Binds DNA in the form of homodimer or heterodimer with either TFE3, TFEB or TFEC. Interacts with small GTPases Rag (RagA/RRAGA, RagB/RRAGB, RagC/RRAGC and/or RagD/RRAGD); promoting its recruitment to lysosomal membrane in the presence of nutrients. Interacts with KARS1. Identified in a complex with HINT1 and CTNNB1. Interacts with VSX2. When nutrients are present, phosphorylation by MTOR at Ser-5 via non-canonical mTORC1 pathway promotes ubiquitination by the SCF(BTRC) complex, followed by degradation. Phosphorylation at Ser-405 significantly enhances the ability to bind the tyrosinase promoter. Phosphorylation by MARK3/cTAK1 at Ser-280 promotes association with 14-3-3/YWHA adapters and retention in the cytosol. Phosphorylated at Ser-180 and Ser-516 following KIT signaling, triggering a short live activation: Phosphorylation at Ser-180 and Ser-516 by MAPK and RPS6KA1, respectively, activate the transcription factor activity but also promote ubiquitination and subsequent degradation by the proteasome. Phosphorylated in response to blue light (415nm). In terms of processing, ubiquitinated by the SCF(BTRC) and SCF(FBXW11) complexes following phosphorylation ar Ser-5 by MTOR, leading to its degradation by the proteasome. Ubiquitinated following phosphorylation at Ser-180, leading to subsequent degradation by the proteasome. Deubiquitinated by USP13, preventing its degradation. As to expression, expressed in melanocytes (at protein level). Expressed in the retinal pigment epithelium, brain, and placenta. Expressed in the kidney. In terms of tissue distribution, expressed in the kidney and retinal pigment epithelium. As to expression, expressed in the kidney. Expressed in melanocytes.

It is found in the nucleus. The protein localises to the cytoplasm. Its subcellular location is the lysosome membrane. In terms of biological role, transcription factor that acts as a master regulator of melanocyte survival and differentiation as well as melanosome biogenesis. Binds to M-boxes (5'-TCATGTG-3') and symmetrical DNA sequences (E-boxes) (5'-CACGTG-3') found in the promoter of pigmentation genes, such as tyrosinase (TYR). Involved in the cellular response to amino acid availability by acting downstream of MTOR: in the presence of nutrients, MITF phosphorylation by MTOR promotes its inactivation. Upon starvation or lysosomal stress, inhibition of MTOR induces MITF dephosphorylation, resulting in transcription factor activity. Plays an important role in melanocyte development by regulating the expression of tyrosinase (TYR) and tyrosinase-related protein 1 (TYRP1). Plays a critical role in the differentiation of various cell types, such as neural crest-derived melanocytes, mast cells, osteoclasts and optic cup-derived retinal pigment epithelium. The sequence is that of Microphthalmia-associated transcription factor from Homo sapiens (Human).